Here is a 914-residue protein sequence, read N- to C-terminus: Probable dipeptidyl-aminopeptidase B (914 aa).

The segment at 1 to 82 (MGAEKRINDE…GLPPPSGAQR (82 aa)) is disordered. The Cytoplasmic segment spans residues 1–88 (MGAEKRINDE…GAQRTPKKVS (88 aa)). A compositionally biased stretch (low complexity) spans 26–38 (DSTSTASISLALI). A helical; Signal-anchor for type II membrane protein transmembrane segment spans residues 89–109 (IIFWLVAALCVGGWLVAFFVF). The Vacuolar portion of the chain corresponds to 110–914 (MGSPKKDSDK…RSLLKRMSNA (805 aa)). N-linked (GlcNAc...) asparagine glycosylation is found at asparagine 128, asparagine 295, asparagine 347, and asparagine 617. The active-site Charge relay system is serine 751. Asparagine 810 carries N-linked (GlcNAc...) asparagine glycosylation. Residues aspartate 828 and histidine 861 each act as charge relay system in the active site. Asparagine 897 carries N-linked (GlcNAc...) asparagine glycosylation.

Belongs to the peptidase S9B family.

Its subcellular location is the vacuole membrane. It catalyses the reaction Release of an N-terminal dipeptide, Xaa-Yaa-|-Zaa-, from a polypeptide, preferentially when Yaa is Pro, provided Zaa is neither Pro nor hydroxyproline.. Type IV dipeptidyl-peptidase which removes N-terminal dipeptides sequentially from polypeptides having unsubstituted N-termini provided that the penultimate residue is proline. The polypeptide is Probable dipeptidyl-aminopeptidase B (DAPB) (Uncinocarpus reesii (strain UAMH 1704)).